A 198-amino-acid chain; its full sequence is Na(+)-translocating NADH-quinone reductase subunit E (198 aa).

6 helical membrane-spanning segments follow: residues 11 to 31, 35 to 55, 77 to 97, 109 to 129, 140 to 160, and 176 to 196; these read AVFI…FLAV, VTTA…SVPA, FLNF…LEMI, LGIF…VSFM, IVYG…LASI, and LGIT…FSGV.

The protein belongs to the NqrDE/RnfAE family. In terms of assembly, composed of six subunits; NqrA, NqrB, NqrC, NqrD, NqrE and NqrF.

The protein resides in the cell inner membrane. It carries out the reaction a ubiquinone + n Na(+)(in) + NADH + H(+) = a ubiquinol + n Na(+)(out) + NAD(+). In terms of biological role, NQR complex catalyzes the reduction of ubiquinone-1 to ubiquinol by two successive reactions, coupled with the transport of Na(+) ions from the cytoplasm to the periplasm. NqrA to NqrE are probably involved in the second step, the conversion of ubisemiquinone to ubiquinol. In Photorhabdus laumondii subsp. laumondii (strain DSM 15139 / CIP 105565 / TT01) (Photorhabdus luminescens subsp. laumondii), this protein is Na(+)-translocating NADH-quinone reductase subunit E.